We begin with the raw amino-acid sequence, 339 residues long: Cyclin-D1-1 (339 aa).

This sequence belongs to the cyclin family. Cyclin D subfamily. Interacts with CDKA-1 and KRP6/ICK4. As to expression, expressed in roots, leaves and flowers.

Functionally, may activate cell cycle in the root apical meristem (RAM) and promote embryonic root (radicle) protrusion. The chain is Cyclin-D1-1 (CYCD1-1) from Arabidopsis thaliana (Mouse-ear cress).